Consider the following 572-residue polypeptide: Neuronal acetylcholine receptor subunit alpha-9-I (572 aa).

The first 19 residues, 1 to 19 (MKTVVLLTWISCWIDVCTS), serve as a signal peptide directing secretion. Over 20–232 (AQGRYAQKLL…YTLHLKRRSL (213 aa)) the chain is Extracellular. N-linked (GlcNAc...) asparagine glycosylation is present at Asn-51. Cys-149 and Cys-163 are joined by a disulfide. A glycan (N-linked (GlcNAc...) asparagine) is linked at Asn-164. A disulfide bond links Cys-213 and Cys-214. Transmembrane regions (helical) follow at residues 233–253 (FYIF…PLGF), 263–283 (VSLG…VAES), and 297–317 (YIAT…IMNI). Residues 318 to 550 (HFCGAEAKPV…WKKVAKVMDR (233 aa)) lie on the Cytoplasmic side of the membrane. The tract at residues 405 to 458 (GHLQNHHSTHQNHLDNCRYANGGHRDDHYSNRSNQNHHSNRSQTSKGEGGEEKR) is disordered. Over residues 435–447 (NRSNQNHHSNRSQ) the composition is skewed to low complexity. A helical transmembrane segment spans residues 551–571 (FFMWIFFIMVFLMSILIIGKA).

Belongs to the ligand-gated ion channel (TC 1.A.9) family. Acetylcholine receptor (TC 1.A.9.1) subfamily. In terms of tissue distribution, expressed in the liver, olfactory mucosa, pituitary gland, hair cells of the saccule and spleen.

It localises to the postsynaptic cell membrane. The protein resides in the cell membrane. The sequence is that of Neuronal acetylcholine receptor subunit alpha-9-I (nachra9) from Oncorhynchus mykiss (Rainbow trout).